The primary structure comprises 147 residues: Peptide deformylase (147 aa).

Fe cation is bound by residues C88 and H130. E131 is an active-site residue. A Fe cation-binding site is contributed by H134.

This sequence belongs to the polypeptide deformylase family. Fe(2+) serves as cofactor.

It catalyses the reaction N-terminal N-formyl-L-methionyl-[peptide] + H2O = N-terminal L-methionyl-[peptide] + formate. Functionally, removes the formyl group from the N-terminal Met of newly synthesized proteins. Requires at least a dipeptide for an efficient rate of reaction. N-terminal L-methionine is a prerequisite for activity but the enzyme has broad specificity at other positions. The sequence is that of Peptide deformylase from Clostridium botulinum (strain Alaska E43 / Type E3).